The chain runs to 276 residues: Phosphatidylglycerol--prolipoprotein diacylglyceryl transferase (276 aa).

7 helical membrane passes run 17–37, 59–79, 95–115, 129–149, 176–196, 202–222, and 237–257; these read LAIR…LWFG, MLFF…VLFY, WEGG…MWLF, FIAP…FING, SQLY…WLFA, MGAV…AAEF, and LSMG…MVVW. Arg142 lines the a 1,2-diacyl-sn-glycero-3-phospho-(1'-sn-glycerol) pocket.

The protein belongs to the Lgt family.

Its subcellular location is the cell inner membrane. It catalyses the reaction L-cysteinyl-[prolipoprotein] + a 1,2-diacyl-sn-glycero-3-phospho-(1'-sn-glycerol) = an S-1,2-diacyl-sn-glyceryl-L-cysteinyl-[prolipoprotein] + sn-glycerol 1-phosphate + H(+). It functions in the pathway protein modification; lipoprotein biosynthesis (diacylglyceryl transfer). In terms of biological role, catalyzes the transfer of the diacylglyceryl group from phosphatidylglycerol to the sulfhydryl group of the N-terminal cysteine of a prolipoprotein, the first step in the formation of mature lipoproteins. In Cupriavidus pinatubonensis (strain JMP 134 / LMG 1197) (Cupriavidus necator (strain JMP 134)), this protein is Phosphatidylglycerol--prolipoprotein diacylglyceryl transferase.